The primary structure comprises 268 residues: Undecaprenyl-diphosphatase (268 aa).

Helical transmembrane passes span 5 to 25 (TIAQ…IPVS), 43 to 63 (GKAF…SVYA), 84 to 104 (LGIL…YQII), 107 to 127 (VLFE…IVLL), 184 to 204 (AAEF…AYDL), 214 to 234 (ADLQ…VLVV), and 247 to 267 (ALFG…VLVL).

The protein belongs to the UppP family.

It is found in the cell inner membrane. The catalysed reaction is di-trans,octa-cis-undecaprenyl diphosphate + H2O = di-trans,octa-cis-undecaprenyl phosphate + phosphate + H(+). Catalyzes the dephosphorylation of undecaprenyl diphosphate (UPP). Confers resistance to bacitracin. The sequence is that of Undecaprenyl-diphosphatase from Chelativorans sp. (strain BNC1).